The chain runs to 463 residues: Glutamyl-tRNA reductase (463 aa).

Residues 49–52 (TCNR), Ser-109, 114–116 (EQQ), and Gln-120 each bind substrate. Catalysis depends on Cys-50, which acts as the Nucleophile. Position 196-201 (196-201 (GAGAMS)) interacts with NADP(+).

Belongs to the glutamyl-tRNA reductase family. As to quaternary structure, homodimer.

It catalyses the reaction (S)-4-amino-5-oxopentanoate + tRNA(Glu) + NADP(+) = L-glutamyl-tRNA(Glu) + NADPH + H(+). It functions in the pathway porphyrin-containing compound metabolism; protoporphyrin-IX biosynthesis; 5-aminolevulinate from L-glutamyl-tRNA(Glu): step 1/2. Catalyzes the NADPH-dependent reduction of glutamyl-tRNA(Glu) to glutamate 1-semialdehyde (GSA). The protein is Glutamyl-tRNA reductase of Corynebacterium glutamicum (strain ATCC 13032 / DSM 20300 / JCM 1318 / BCRC 11384 / CCUG 27702 / LMG 3730 / NBRC 12168 / NCIMB 10025 / NRRL B-2784 / 534).